We begin with the raw amino-acid sequence, 92 residues long: Large ribosomal subunit protein uL23c (92 aa).

This sequence belongs to the universal ribosomal protein uL23 family. As to quaternary structure, part of the 50S ribosomal subunit.

Its subcellular location is the plastid. The protein resides in the chloroplast. Its function is as follows. Binds to 23S rRNA. This is Large ribosomal subunit protein uL23c (rpl23) from Mesostigma viride (Green alga).